The following is a 133-amino-acid chain: UPF0225 protein BB3385 (133 aa).

Belongs to the UPF0225 family.

This Bordetella bronchiseptica (strain ATCC BAA-588 / NCTC 13252 / RB50) (Alcaligenes bronchisepticus) protein is UPF0225 protein BB3385.